Consider the following 403-residue polypeptide: Large ribosomal subunit protein uL3 (403 aa).

Residues 1–37 are disordered; sequence MSHRKFSAPRHGSLGFLPRKRSSRHRGKVKSFPKDDP. S13 bears the Phosphoserine mark. Positions 18–31 are enriched in basic residues; sequence PRKRSSRHRGKVKS. Residue K39 forms a Glycyl lysine isopeptide (Lys-Gly) (interchain with G-Cter in SUMO2) linkage. At K136 the chain carries N6-acetyllysine. Residues K224 and K226 each participate in a glycyl lysine isopeptide (Lys-Gly) (interchain with G-Cter in SUMO2) cross-link. The residue at position 245 (H245) is a Tele-methylhistidine. K286 and K294 each carry N6-acetyllysine; alternate. A Glycyl lysine isopeptide (Lys-Gly) (interchain with G-Cter in SUMO2); alternate cross-link involves residue K286. A Glycyl lysine isopeptide (Lys-Gly) (interchain with G-Cter in SUMO1); alternate cross-link involves residue K294. S304 bears the Phosphoserine mark. At K366 the chain carries N6-acetyllysine; alternate. A Glycyl lysine isopeptide (Lys-Gly) (interchain with G-Cter in SUMO2); alternate cross-link involves residue K366. Position 373 is an N6-acetyllysine (K373). Glycyl lysine isopeptide (Lys-Gly) (interchain with G-Cter in SUMO2) cross-links involve residues K386, K393, and K399.

The protein belongs to the universal ribosomal protein uL3 family. As to quaternary structure, component of the large ribosomal subunit. Interacts with DHX33. In terms of processing, constitutively monomethylated at His-245 by METTL18. Methylation at His-245 regulates translation elongation by slowing ribosome traversal on tyrosine codons: slower elongation provides enough time for proper folding of synthesized proteins and prevents cellular aggregation of tyrosine-rich proteins. It is not required for incorporation of RPL3 into ribosomes.

It localises to the nucleus. It is found in the nucleolus. The protein resides in the cytoplasm. Component of the large ribosomal subunit. The ribosome is a large ribonucleoprotein complex responsible for the synthesis of proteins in the cell. In Homo sapiens (Human), this protein is Large ribosomal subunit protein uL3 (RPL3).